A 127-amino-acid polypeptide reads, in one-letter code: MARIAGVNIPQNKLVHIGLTYIYGIGNKFSSQICTSLEIPKAKRINELTDEDILKIREYIDANFKVEGDLRRDYSLTIKRLIDLACYRGSRHRKKLPVRGQRTRCNARTRKGKAIAIAGKKLTPLKK.

It belongs to the universal ribosomal protein uS13 family. In terms of assembly, part of the 30S ribosomal subunit. Forms a loose heterodimer with protein S19. Forms two bridges to the 50S subunit in the 70S ribosome.

Located at the top of the head of the 30S subunit, it contacts several helices of the 16S rRNA. In the 70S ribosome it contacts the 23S rRNA (bridge B1a) and protein L5 of the 50S subunit (bridge B1b), connecting the 2 subunits; these bridges are implicated in subunit movement. Contacts the tRNAs in the A and P-sites. This chain is Small ribosomal subunit protein uS13, found in Pelagibacter ubique (strain HTCC1062).